The chain runs to 120 residues: Ribonuclease P protein component (120 aa).

It belongs to the RnpA family. Consists of a catalytic RNA component (M1 or rnpB) and a protein subunit.

It carries out the reaction Endonucleolytic cleavage of RNA, removing 5'-extranucleotides from tRNA precursor.. Its function is as follows. RNaseP catalyzes the removal of the 5'-leader sequence from pre-tRNA to produce the mature 5'-terminus. It can also cleave other RNA substrates such as 4.5S RNA. The protein component plays an auxiliary but essential role in vivo by binding to the 5'-leader sequence and broadening the substrate specificity of the ribozyme. The chain is Ribonuclease P protein component from Acidothermus cellulolyticus (strain ATCC 43068 / DSM 8971 / 11B).